The chain runs to 121 residues: Large ribosomal subunit protein bL19 (121 aa).

Belongs to the bacterial ribosomal protein bL19 family.

In terms of biological role, this protein is located at the 30S-50S ribosomal subunit interface and may play a role in the structure and function of the aminoacyl-tRNA binding site. This is Large ribosomal subunit protein bL19 from Gloeobacter violaceus (strain ATCC 29082 / PCC 7421).